Reading from the N-terminus, the 190-residue chain is Imidazoleglycerol-phosphate dehydratase (190 aa).

It belongs to the imidazoleglycerol-phosphate dehydratase family.

It is found in the cytoplasm. The enzyme catalyses D-erythro-1-(imidazol-4-yl)glycerol 3-phosphate = 3-(imidazol-4-yl)-2-oxopropyl phosphate + H2O. It functions in the pathway amino-acid biosynthesis; L-histidine biosynthesis; L-histidine from 5-phospho-alpha-D-ribose 1-diphosphate: step 6/9. This chain is Imidazoleglycerol-phosphate dehydratase, found in Campylobacter fetus subsp. fetus (strain 82-40).